A 411-amino-acid chain; its full sequence is Secretion apparatus protein BsaZ (411 aa).

Transmembrane regions (helical) follow at residues 28 to 48 (IVAL…VDLT), 80 to 100 (IAAP…LVQS), 137 to 157 (ALLY…LYHA), and 175 to 195 (IVLT…VLIL). The tract at residues 341–411 (AANRGGPPPE…APARTGDQNA (71 aa)) is disordered. Low complexity predominate over residues 370–404 (DACADNAFPDDAPPGAAAPNAGSPDGPAPDGGAPA).

This sequence belongs to the type III secretion exporter family.

It localises to the cell membrane. Its function is as follows. Part of the bsa type III secretion system, is involved in the intracellular replication of invading bacteria inside the host cell. Probably necessary for the lysis of the vacuole membrane and escape into the host cell cytoplasm. The sequence is that of Secretion apparatus protein BsaZ (bsaZ) from Burkholderia pseudomallei (strain 1710b).